Here is a 303-residue protein sequence, read N- to C-terminus: Putative ankyrin repeat protein R601 (303 aa).

ANK repeat units follow at residues D86–V115, N117–V146, D147–S176, and N200–Y233.

The polypeptide is Putative ankyrin repeat protein R601 (Acanthamoeba polyphaga (Amoeba)).